We begin with the raw amino-acid sequence, 360 residues long: Phospho-N-acetylmuramoyl-pentapeptide-transferase (360 aa).

10 helical membrane-spanning segments follow: residues arginine 25 to isoleucine 45, methionine 74 to alanine 94, tyrosine 97 to tyrosine 117, tryptophan 132 to alanine 152, isoleucine 168 to serine 188, glycine 199 to serine 219, serine 236 to phenylalanine 256, valine 263 to isoleucine 283, valine 288 to valine 308, and valine 338 to lysine 358.

Belongs to the glycosyltransferase 4 family. MraY subfamily. Mg(2+) serves as cofactor.

Its subcellular location is the cell inner membrane. The catalysed reaction is UDP-N-acetyl-alpha-D-muramoyl-L-alanyl-gamma-D-glutamyl-meso-2,6-diaminopimeloyl-D-alanyl-D-alanine + di-trans,octa-cis-undecaprenyl phosphate = di-trans,octa-cis-undecaprenyl diphospho-N-acetyl-alpha-D-muramoyl-L-alanyl-D-glutamyl-meso-2,6-diaminopimeloyl-D-alanyl-D-alanine + UMP. It functions in the pathway cell wall biogenesis; peptidoglycan biosynthesis. Functionally, catalyzes the initial step of the lipid cycle reactions in the biosynthesis of the cell wall peptidoglycan: transfers peptidoglycan precursor phospho-MurNAc-pentapeptide from UDP-MurNAc-pentapeptide onto the lipid carrier undecaprenyl phosphate, yielding undecaprenyl-pyrophosphoryl-MurNAc-pentapeptide, known as lipid I. The chain is Phospho-N-acetylmuramoyl-pentapeptide-transferase from Stutzerimonas stutzeri (strain A1501) (Pseudomonas stutzeri).